The sequence spans 388 residues: Lipoyl synthase, mitochondrial (388 aa).

A mitochondrion-targeting transit peptide spans 1–18 (MRLTTVQRRFLVSTKAKV). The segment covering 22-39 (SISSTANTGSASAGAPNG) has biased composition (low complexity). Positions 22 to 43 (SISSTANTGSASAGAPNGQTRR) are disordered. Positions 120, 125, 131, 151, 155, 158, and 366 each coordinate [4Fe-4S] cluster. The 222-residue stretch at 134 to 355 (GKDKSKATAT…KDKAKEMGFL (222 aa)) folds into the Radical SAM core domain.

The protein belongs to the radical SAM superfamily. Lipoyl synthase family. [4Fe-4S] cluster is required as a cofactor.

It localises to the mitochondrion. The catalysed reaction is [[Fe-S] cluster scaffold protein carrying a second [4Fe-4S](2+) cluster] + N(6)-octanoyl-L-lysyl-[protein] + 2 oxidized [2Fe-2S]-[ferredoxin] + 2 S-adenosyl-L-methionine + 4 H(+) = [[Fe-S] cluster scaffold protein] + N(6)-[(R)-dihydrolipoyl]-L-lysyl-[protein] + 4 Fe(3+) + 2 hydrogen sulfide + 2 5'-deoxyadenosine + 2 L-methionine + 2 reduced [2Fe-2S]-[ferredoxin]. Its pathway is protein modification; protein lipoylation via endogenous pathway; protein N(6)-(lipoyl)lysine from octanoyl-[acyl-carrier-protein]: step 2/2. Its function is as follows. Catalyzes the radical-mediated insertion of two sulfur atoms into the C-6 and C-8 positions of the octanoyl moiety bound to the lipoyl domains of lipoate-dependent enzymes, thereby converting the octanoylated domains into lipoylated derivatives. In Candida glabrata (strain ATCC 2001 / BCRC 20586 / JCM 3761 / NBRC 0622 / NRRL Y-65 / CBS 138) (Yeast), this protein is Lipoyl synthase, mitochondrial.